The following is a 368-amino-acid chain: Protein mab-21-like 3 (368 aa).

This sequence belongs to the mab-21 family.

The polypeptide is Protein mab-21-like 3 (mab21L3) (Xenopus laevis (African clawed frog)).